The primary structure comprises 287 residues: 2-dehydro-3-deoxyphosphooctonate aldolase (287 aa).

It belongs to the KdsA family.

It is found in the cytoplasm. The catalysed reaction is D-arabinose 5-phosphate + phosphoenolpyruvate + H2O = 3-deoxy-alpha-D-manno-2-octulosonate-8-phosphate + phosphate. The protein operates within carbohydrate biosynthesis; 3-deoxy-D-manno-octulosonate biosynthesis; 3-deoxy-D-manno-octulosonate from D-ribulose 5-phosphate: step 2/3. It functions in the pathway bacterial outer membrane biogenesis; lipopolysaccharide biosynthesis. In Nitrobacter winogradskyi (strain ATCC 25391 / DSM 10237 / CIP 104748 / NCIMB 11846 / Nb-255), this protein is 2-dehydro-3-deoxyphosphooctonate aldolase.